Consider the following 276-residue polypeptide: Imidazole glycerol phosphate synthase subunit HisF (276 aa).

Catalysis depends on residues aspartate 11 and aspartate 130.

It belongs to the HisA/HisF family. As to quaternary structure, heterodimer of HisH and HisF.

Its subcellular location is the cytoplasm. It carries out the reaction 5-[(5-phospho-1-deoxy-D-ribulos-1-ylimino)methylamino]-1-(5-phospho-beta-D-ribosyl)imidazole-4-carboxamide + L-glutamine = D-erythro-1-(imidazol-4-yl)glycerol 3-phosphate + 5-amino-1-(5-phospho-beta-D-ribosyl)imidazole-4-carboxamide + L-glutamate + H(+). The protein operates within amino-acid biosynthesis; L-histidine biosynthesis; L-histidine from 5-phospho-alpha-D-ribose 1-diphosphate: step 5/9. IGPS catalyzes the conversion of PRFAR and glutamine to IGP, AICAR and glutamate. The HisF subunit catalyzes the cyclization activity that produces IGP and AICAR from PRFAR using the ammonia provided by the HisH subunit. In Beijerinckia indica subsp. indica (strain ATCC 9039 / DSM 1715 / NCIMB 8712), this protein is Imidazole glycerol phosphate synthase subunit HisF.